Reading from the N-terminus, the 233-residue chain is Pre-hexon-linking protein VIII (233 aa).

Phosphothreonine; by host is present on T64. The propeptide occupies 112-163; sequence ARHVRFRDRPSPYSSGSIKRLIIRGRGIQLNDEVVSSSTGPRPDGVFQLGGA. Residue S180 is modified to Phosphoserine; by host.

The protein belongs to the adenoviridae hexon-linking protein family. Interacts with the peripentonal hexons as well as the hexons in the facets. Part of a complex composed of the core-capsid bridging protein, the endosome lysis protein VI and the hexon-linking protein VIII; these interactions bridge the virus core to the capsid. Post-translationally, cleaved by the viral protease during virion maturation. May cause the middle segment to be shed from the capsid.

The protein localises to the virion. Its subcellular location is the host nucleus. Structural component of the virion that acts as a cement protein on the capsid interior and which glue the peripentonal hexons and group-of-nine hexons together. In Homo sapiens (Human), this protein is Pre-hexon-linking protein VIII.